Consider the following 82-residue polypeptide: MVTIRLARHGAKKRPFYQIVVADSRNSVTGRFIEKVGFFNPTAQGQEEGLRLDLDRVNHWVGQGASLSDRVAKLVKDAQKAA.

Belongs to the bacterial ribosomal protein bS16 family.

The sequence is that of Small ribosomal subunit protein bS16 from Vibrio atlanticus (strain LGP32) (Vibrio splendidus (strain Mel32)).